Here is a 127-residue protein sequence, read N- to C-terminus: Aspartate 1-decarboxylase (127 aa).

Serine 25 functions as the Schiff-base intermediate with substrate; via pyruvic acid in the catalytic mechanism. Serine 25 carries the post-translational modification Pyruvic acid (Ser). Threonine 57 is a substrate binding site. The Proton donor role is filled by tyrosine 58. 73–75 (GAA) contributes to the substrate binding site.

This sequence belongs to the PanD family. In terms of assembly, heterooctamer of four alpha and four beta subunits. Pyruvate is required as a cofactor. Is synthesized initially as an inactive proenzyme, which is activated by self-cleavage at a specific serine bond to produce a beta-subunit with a hydroxyl group at its C-terminus and an alpha-subunit with a pyruvoyl group at its N-terminus.

It localises to the cytoplasm. The catalysed reaction is L-aspartate + H(+) = beta-alanine + CO2. The protein operates within cofactor biosynthesis; (R)-pantothenate biosynthesis; beta-alanine from L-aspartate: step 1/1. Catalyzes the pyruvoyl-dependent decarboxylation of aspartate to produce beta-alanine. The sequence is that of Aspartate 1-decarboxylase from Listeria monocytogenes serotype 4b (strain CLIP80459).